A 220-amino-acid polypeptide reads, in one-letter code: Ribonuclease HII (220 aa).

The 189-residue stretch at 32–220 folds into the RNase H type-2 domain; it reads KHIAGIDEAG…FAPIKGCFDC (189 aa). Residues Asp38, Glu39, and Asp130 each coordinate a divalent metal cation.

This sequence belongs to the RNase HII family. Requires Mn(2+) as cofactor. Mg(2+) is required as a cofactor.

The protein resides in the cytoplasm. It carries out the reaction Endonucleolytic cleavage to 5'-phosphomonoester.. Endonuclease that specifically degrades the RNA of RNA-DNA hybrids. The polypeptide is Ribonuclease HII (Brucella abortus (strain 2308)).